A 256-amino-acid chain; its full sequence is Pimeloyl-[acyl-carrier protein] methyl ester esterase (256 aa).

The 225-residue stretch at 17-241 (VYLIHGWGAN…KAAHAPFLSH (225 aa)) folds into the AB hydrolase-1 domain. Residues tryptophan 23, 83 to 84 (SL), and 145 to 149 (FLQLQ) each bind substrate. Serine 83 acts as the Nucleophile in catalysis. Active-site residues include aspartate 207 and histidine 235. Position 235 (histidine 235) interacts with substrate.

Belongs to the AB hydrolase superfamily. Carboxylesterase BioH family. In terms of assembly, monomer.

The protein resides in the cytoplasm. It catalyses the reaction 6-carboxyhexanoyl-[ACP] methyl ester + H2O = 6-carboxyhexanoyl-[ACP] + methanol + H(+). It functions in the pathway cofactor biosynthesis; biotin biosynthesis. In terms of biological role, the physiological role of BioH is to remove the methyl group introduced by BioC when the pimeloyl moiety is complete. It allows to synthesize pimeloyl-ACP via the fatty acid synthetic pathway through the hydrolysis of the ester bonds of pimeloyl-ACP esters. This chain is Pimeloyl-[acyl-carrier protein] methyl ester esterase, found in Neisseria meningitidis serogroup C / serotype 2a (strain ATCC 700532 / DSM 15464 / FAM18).